Consider the following 120-residue polypeptide: Immunoglobulin kappa variable 2-112 (120 aa).

Residues 1-20 (MRCSLQFLGVLMFWISGVSG) form the signal peptide. Residues 21–43 (DIVITQDELSNPVTSGESVSISC) form a framework-1 region. Residues cysteine 43 and cysteine 113 are joined by a disulfide bond. Positions 44–59 (RSSKSLLYKDGKTYLN) are complementarity-determining-1. The segment at 60–74 (WFLQRPGQSPQLLIY) is framework-2. A complementarity-determining-2 region spans residues 75-81 (LMSTRAS). Residues 82–113 (GVSDRFSGSGSGTDFTLEISRVKAEDVGVYYC) form a framework-3 region. Positions 114 to 120 (QQLVEYP) are complementarity-determining-3.

The protein is Immunoglobulin kappa variable 2-112 of Mus musculus (Mouse).